Reading from the N-terminus, the 233-residue chain is N-(5'-phosphoribosyl)anthranilate isomerase (233 aa).

Belongs to the TrpF family.

It catalyses the reaction N-(5-phospho-beta-D-ribosyl)anthranilate = 1-(2-carboxyphenylamino)-1-deoxy-D-ribulose 5-phosphate. The protein operates within amino-acid biosynthesis; L-tryptophan biosynthesis; L-tryptophan from chorismate: step 3/5. The protein is N-(5'-phosphoribosyl)anthranilate isomerase of Synechococcus sp. (strain JA-2-3B'a(2-13)) (Cyanobacteria bacterium Yellowstone B-Prime).